Here is a 441-residue protein sequence, read N- to C-terminus: C4-dicarboxylate transport protein (441 aa).

The Cytoplasmic portion of the chain corresponds to 1-30 (MIIEHSAEVRGKTPLYRHLYVQVLAAIAAG). The helical transmembrane segment at 31 to 49 (ILLGHFYPDIGTELKPLGD) threads the bilayer. Over 50-68 (AFIRLVKMIIAPVIFLTVA) the chain is Periplasmic. The chain crosses the membrane as a helical span at residues 69 to 87 (TGIAGMTDLAKVGRVAGKA). The Cytoplasmic segment spans residues 88 to 99 (MIYFLAFSTLAL). Residues 100–118 (VVGLVVANVVQPGAGMHID) form a helical membrane-spanning segment. Topologically, residues 119-149 (PASLDAKAVATYAEKAHEQSITGFLMNIIPT) are periplasmic. The helical transmembrane segment at 150–168 (TLVGAFAEGDILQVLFISV) threads the bilayer. The Cytoplasmic segment spans residues 169-171 (LFG). A helical membrane pass occupies residues 172 to 190 (ISLAIVGKKAEPVVDFLQA). Over 191-209 (LTLPIFRLVAILMKAAPIG) the chain is Periplasmic. A helical membrane pass occupies residues 210-228 (AFGAMAFTIGKYGIASIAN). At 229 to 241 (LAMLIGTFYLTSF) the chain is on the cytoplasmic side. Residues 242–260 (LFVFIVLGAVARYNGFSIL) traverse the membrane as a helical segment. The Periplasmic segment spans residues 261–281 (SLIRYIKEELLLVLGTSSSEA). A helical membrane pass occupies residues 282–300 (ALPGLMNKMEKAGCKRSVV). Residues 301–320 (GLVIPTGYSFNLDGTNIYMT) lie on the Cytoplasmic side of the membrane. A helical membrane pass occupies residues 321–339 (LAALFIAQATDTPLSYGDQ). Over 340–350 (ILLLLVAMLSS) the chain is Periplasmic. The chain crosses the membrane as a helical span at residues 351–369 (KGAAGITGAGFITLAATLS). Residues 370-378 (VVPSVPVAG) lie on the Cytoplasmic side of the membrane. The chain crosses the membrane as a helical span at residues 379–398 (MALILGIDRFMSECRALTNF). Topologically, residues 399 to 405 (VGNAVAT) are periplasmic. Residues 406-424 (IVVAKWEGELDQAQLSAAL) form a helical membrane-spanning segment. Residues 425–441 (GGEASVEAIPAVVQPAE) are Cytoplasmic-facing.

Belongs to the dicarboxylate/amino acid:cation symporter (DAACS) (TC 2.A.23) family.

It is found in the cell inner membrane. Responsible for the transport of dicarboxylates such as succinate, fumarate, and malate from the periplasm across the inner membrane. This transport system plays an important role in the energy supply of rhizobium-legume symbionts. This is C4-dicarboxylate transport protein (dctA) from Rhizobium meliloti (strain 1021) (Ensifer meliloti).